Consider the following 366-residue polypeptide: Inactive protein RESTRICTED TEV MOVEMENT 2 (366 aa).

The sHSP domain occupies 14 to 121; that stretch reads VQYEDFVPKS…LPETSRTEAA (108 aa). An A-1 repeat occupies 129–133; it reads LEEKR. Residues 129–220 are 6 X 5 AA repeats A of L-E-E-[SKR]-[ERK]; that stretch reads LEEKRLLEES…LEERRLEERK (92 aa). The stretch at 135–139 is one A-2 repeat; sequence LEESR. An A-3 repeat occupies 156-160; sequence LEEKE. One copy of the B-1 repeat lies at 163 to 176; it reads IRKLQEEAKAKEEA. The segment at 163–206 is 3 X 14 AA repeats B of [IMA]-[RK]-K-L-Q-E-E-A-K-A-K-E-[EK]-[LA]; it reads IRKLQEEAKAKEEAEMRKLQEEAKANEEAAAKKLQEEIEAKEKL. The B-2 repeat unit spans residues 178 to 191; sequence MRKLQEEAKANEEA. A B-3 repeat occupies 193–205; sequence AKKLQEEIEAKEK. An A-4 repeat occupies 206–210; sequence LEERK. The A-5 repeat unit spans residues 211–215; that stretch reads LEERR. One copy of the A-6 repeat lies at 216–220; it reads LEERK. Residues 322–342 form a helical membrane-spanning segment; sequence LMMNVGVAALVIFALGAYVSY. The interval 345–366 is disordered; it reads CSSSSSSSSSSPSSSSSSTKPE. Positions 346-366 are enriched in low complexity; it reads SSSSSSSSSSPSSSSSSTKPE.

It belongs to the small heat shock protein (HSP20) family.

The protein localises to the cell membrane. In terms of biological role, seems to not be involved in heat resistance. Unable to mediate restriction of long-distance movement of the pathogenic tobacco etch virus (TEV) without causing a hypersensitive response or inducing systemic acquired resistance. The protein is Inactive protein RESTRICTED TEV MOVEMENT 2 (RTM2) of Arabidopsis thaliana (Mouse-ear cress).